A 76-amino-acid chain; its full sequence is U-scoloptoxin(13)-Sa1a (76 aa).

Positions 1 to 22 are cleaved as a signal peptide; sequence MAYIFALIFAFVVCINTDVIQA.

It belongs to the scoloptoxin-13 family. Post-translationally, contains 4 disulfide bonds. Expressed by the venom gland.

The protein resides in the secreted. In Scolopendra alternans (Florida Keys giant centipede), this protein is U-scoloptoxin(13)-Sa1a.